The sequence spans 208 residues: Small ribosomal subunit protein uS4 (208 aa).

The interval Tyr28 to Ser48 is disordered. The region spanning Met95–Gly160 is the S4 RNA-binding domain.

Belongs to the universal ribosomal protein uS4 family. In terms of assembly, part of the 30S ribosomal subunit. Contacts protein S5. The interaction surface between S4 and S5 is involved in control of translational fidelity.

One of the primary rRNA binding proteins, it binds directly to 16S rRNA where it nucleates assembly of the body of the 30S subunit. Its function is as follows. With S5 and S12 plays an important role in translational accuracy. In Arthrobacter sp. (strain FB24), this protein is Small ribosomal subunit protein uS4.